Here is a 236-residue protein sequence, read N- to C-terminus: Probable 2-phosphosulfolactate phosphatase (236 aa).

Belongs to the ComB family. Mg(2+) serves as cofactor.

It catalyses the reaction (2R)-O-phospho-3-sulfolactate + H2O = (2R)-3-sulfolactate + phosphate. The polypeptide is Probable 2-phosphosulfolactate phosphatase (Gloeobacter violaceus (strain ATCC 29082 / PCC 7421)).